Consider the following 265-residue polypeptide: Silencing boundary-establishment protein FUB1-like protein (265 aa).

Positions 194 to 265 are disordered; it reads HPENRSRNEQ…MPPGSSDMFM (72 aa).

The protein belongs to the proteasome inhibitor PI31 family. As to quaternary structure, interacts with the 20S proteasome.

Its subcellular location is the cytoplasm. It is found in the nucleus. Its function is as follows. May play a role in the establishment of transcriptional silencing boundaries, preventing the propagation of heterochromatic silencing. The protein is Silencing boundary-establishment protein FUB1-like protein of Schizosaccharomyces pombe (strain 972 / ATCC 24843) (Fission yeast).